The chain runs to 419 residues: Histidine--tRNA ligase (419 aa).

This sequence belongs to the class-II aminoacyl-tRNA synthetase family.

It is found in the cytoplasm. The catalysed reaction is tRNA(His) + L-histidine + ATP = L-histidyl-tRNA(His) + AMP + diphosphate + H(+). This Pyrobaculum arsenaticum (strain DSM 13514 / JCM 11321 / PZ6) protein is Histidine--tRNA ligase.